Reading from the N-terminus, the 128-residue chain is RutC family protein BUsg_359 (128 aa).

This sequence belongs to the RutC family.

In Buchnera aphidicola subsp. Schizaphis graminum (strain Sg), this protein is RutC family protein BUsg_359.